A 386-amino-acid chain; its full sequence is Succinyl-diaminopimelate desuccinylase (386 aa).

Residue His77 participates in Zn(2+) binding. Residue Asp79 is part of the active site. Asp110 serves as a coordination point for Zn(2+). Glu144 functions as the Proton acceptor in the catalytic mechanism. The Zn(2+) site is built by Glu145, Glu173, and His359.

The protein belongs to the peptidase M20A family. DapE subfamily. Homodimer. Requires Zn(2+) as cofactor. Co(2+) serves as cofactor.

It catalyses the reaction N-succinyl-(2S,6S)-2,6-diaminopimelate + H2O = (2S,6S)-2,6-diaminopimelate + succinate. The protein operates within amino-acid biosynthesis; L-lysine biosynthesis via DAP pathway; LL-2,6-diaminopimelate from (S)-tetrahydrodipicolinate (succinylase route): step 3/3. Catalyzes the hydrolysis of N-succinyl-L,L-diaminopimelic acid (SDAP), forming succinate and LL-2,6-diaminopimelate (DAP), an intermediate involved in the bacterial biosynthesis of lysine and meso-diaminopimelic acid, an essential component of bacterial cell walls. The chain is Succinyl-diaminopimelate desuccinylase from Methylibium petroleiphilum (strain ATCC BAA-1232 / LMG 22953 / PM1).